The chain runs to 222 residues: Exosome complex component Rrp4 (222 aa).

Positions 63–131 (NDSVIGKVVD…EVKKVKLGLH (69 aa)) constitute an S1 motif domain. Residues 139-200 (EGGTLAYITP…EIVKRALEMI (62 aa)) form the KH domain.

This sequence belongs to the RRP4 family. Component of the archaeal exosome complex. Forms a trimer of Rrp4 and/or Csl4 subunits. The trimer associates with a hexameric ring-like arrangement composed of 3 Rrp41-Rrp42 heterodimers.

Its subcellular location is the cytoplasm. Non-catalytic component of the exosome, which is a complex involved in RNA degradation. Increases the RNA binding and the efficiency of RNA degradation. Confers strong poly(A) specificity to the exosome. In Methanothermus fervidus (strain ATCC 43054 / DSM 2088 / JCM 10308 / V24 S), this protein is Exosome complex component Rrp4.